We begin with the raw amino-acid sequence, 1124 residues long: Phytochrome A (1124 aa).

The segment covering 1–19 (MSTTRPSQSSNNSGRSRNS) has biased composition (low complexity). The tract at residues 1 to 21 (MSTTRPSQSSNNSGRSRNSAR) is disordered. The GAF domain occupies 218–401 (SMERLCDTMV…VFAIHVNKEI (184 aa)). Phytochromobilin is bound at residue Cys323. PAS domains lie at 617–687 (VTSE…LQGE) and 750–821 (DYKA…VNFG). Residues 901-1120 (YMKRQIRNPL…ILSVELAAAH (220 aa)) form the Histidine kinase domain.

Belongs to the phytochrome family. In terms of assembly, homodimer. Contains one covalently linked phytochromobilin chromophore.

Its function is as follows. Regulatory photoreceptor which exists in two forms that are reversibly interconvertible by light: the Pr form that absorbs maximally in the red region of the spectrum and the Pfr form that absorbs maximally in the far-red region. Photoconversion of Pr to Pfr induces an array of morphogenic responses, whereas reconversion of Pfr to Pr cancels the induction of those responses. Pfr controls the expression of a number of nuclear genes including those encoding the small subunit of ribulose-bisphosphate carboxylase, chlorophyll A/B binding protein, protochlorophyllide reductase, rRNA, etc. It also controls the expression of its own gene(s) in a negative feedback fashion. This is Phytochrome A (PHYA) from Pisum sativum (Garden pea).